A 97-amino-acid polypeptide reads, in one-letter code: Integration host factor subunit beta (97 aa).

This sequence belongs to the bacterial histone-like protein family. In terms of assembly, heterodimer of an alpha and a beta chain.

Its function is as follows. This protein is one of the two subunits of integration host factor, a specific DNA-binding protein that functions in genetic recombination as well as in transcriptional and translational control. The polypeptide is Integration host factor subunit beta (Buchnera aphidicola subsp. Cinara cedri (strain Cc)).